The primary structure comprises 316 residues: Methionyl-tRNA formyltransferase (316 aa).

112–115 serves as a coordination point for (6S)-5,6,7,8-tetrahydrofolate; sequence GLLP.

It belongs to the Fmt family.

The catalysed reaction is L-methionyl-tRNA(fMet) + (6R)-10-formyltetrahydrofolate = N-formyl-L-methionyl-tRNA(fMet) + (6S)-5,6,7,8-tetrahydrofolate + H(+). Attaches a formyl group to the free amino group of methionyl-tRNA(fMet). The formyl group appears to play a dual role in the initiator identity of N-formylmethionyl-tRNA by promoting its recognition by IF2 and preventing the misappropriation of this tRNA by the elongation apparatus. The chain is Methionyl-tRNA formyltransferase from Chlamydia muridarum (strain MoPn / Nigg).